Consider the following 41-residue polypeptide: Large ribosomal subunit protein bL36 (41 aa).

The segment at 1–21 (MKIRNSLKSLRGRHRDNQLVR) is disordered.

Belongs to the bacterial ribosomal protein bL36 family.

In Methylobacterium sp. (strain 4-46), this protein is Large ribosomal subunit protein bL36.